The chain runs to 235 residues: Ribosomal RNA small subunit methyltransferase G (235 aa).

S-adenosyl-L-methionine contacts are provided by residues Gly-74, Phe-79, Glu-97–Thr-99, Ala-125–Glu-126, and Arg-144.

This sequence belongs to the methyltransferase superfamily. RNA methyltransferase RsmG family.

It is found in the cytoplasm. In terms of biological role, specifically methylates the N7 position of a guanine in 16S rRNA. In Dehalococcoides mccartyi (strain CBDB1), this protein is Ribosomal RNA small subunit methyltransferase G.